Here is a 345-residue protein sequence, read N- to C-terminus: 4-hydroxy-2-oxovalerate aldolase (345 aa).

The 253-residue stretch at 8–260 folds into the Pyruvate carboxyltransferase domain; the sequence is ITVHDMTLRD…ETGVDVFKIQ (253 aa). 16 to 17 provides a ligand contact to substrate; sequence RD. Asp17 provides a ligand contact to Mn(2+). Residue His20 is the Proton acceptor of the active site. Substrate contacts are provided by Ser170 and His199. Residues His199 and His201 each contribute to the Mn(2+) site. A substrate-binding site is contributed by Tyr290.

It belongs to the 4-hydroxy-2-oxovalerate aldolase family.

The catalysed reaction is (S)-4-hydroxy-2-oxopentanoate = acetaldehyde + pyruvate. In Leptothrix cholodnii (strain ATCC 51168 / LMG 8142 / SP-6) (Leptothrix discophora (strain SP-6)), this protein is 4-hydroxy-2-oxovalerate aldolase.